The following is a 121-amino-acid chain: Large ribosomal subunit protein bL20 (121 aa).

The protein belongs to the bacterial ribosomal protein bL20 family.

Its function is as follows. Binds directly to 23S ribosomal RNA and is necessary for the in vitro assembly process of the 50S ribosomal subunit. It is not involved in the protein synthesizing functions of that subunit. This is Large ribosomal subunit protein bL20 from Methylorubrum extorquens (strain PA1) (Methylobacterium extorquens).